The chain runs to 341 residues: Elongation factor G (341 aa).

This sequence belongs to the GTP-binding elongation factor family. EF-G/EF-2 subfamily.

The protein resides in the cytoplasm. Its function is as follows. Catalyzes the GTP-dependent ribosomal translocation step during translation elongation. During this step, the ribosome changes from the pre-translocational (PRE) to the post-translocational (POST) state as the newly formed A-site-bound peptidyl-tRNA and P-site-bound deacylated tRNA move to the P and E sites, respectively. Catalyzes the coordinated movement of the two tRNA molecules, the mRNA and conformational changes in the ribosome. This is Elongation factor G (fus) from Streptomyces ramocissimus.